Consider the following 311-residue polypeptide: Mediator of RNA polymerase II transcription subunit 27 (311 aa).

S132 carries the post-translational modification Phosphoserine. Position 134 is an N6-methyllysine (K134).

The protein belongs to the Mediator complex subunit 27 family. Component of the Mediator complex, which is composed of MED1, MED4, MED6, MED7, MED8, MED9, MED10, MED11, MED12, MED13, MED13L, MED14, MED15, MED16, MED17, MED18, MED19, MED20, MED21, MED22, MED23, MED24, MED25, MED26, MED27, MED29, MED30, MED31, CCNC, CDK8 and CDC2L6/CDK11. The MED12, MED13, CCNC and CDK8 subunits form a distinct module termed the CDK8 module. Mediator containing the CDK8 module is less active than Mediator lacking this module in supporting transcriptional activation. Individual preparations of the Mediator complex lacking one or more distinct subunits have been variously termed ARC, CRSP, DRIP, PC2, SMCC and TRAP.

The protein localises to the nucleus. Functionally, component of the Mediator complex, a coactivator involved in the regulated transcription of nearly all RNA polymerase II-dependent genes. Mediator functions as a bridge to convey information from gene-specific regulatory proteins to the basal RNA polymerase II transcription machinery. Mediator is recruited to promoters by direct interactions with regulatory proteins and serves as a scaffold for the assembly of a functional preinitiation complex with RNA polymerase II and the general transcription factors. The chain is Mediator of RNA polymerase II transcription subunit 27 (MED27) from Homo sapiens (Human).